The sequence spans 562 residues: Arginine--tRNA ligase (562 aa).

A 'HIGH' region motif is present at residues 129-139; the sequence is ANPTGPLHVGH.

This sequence belongs to the class-I aminoacyl-tRNA synthetase family. Monomer.

It is found in the cytoplasm. The enzyme catalyses tRNA(Arg) + L-arginine + ATP = L-arginyl-tRNA(Arg) + AMP + diphosphate. This chain is Arginine--tRNA ligase, found in Xylella fastidiosa (strain M23).